Here is a 115-residue protein sequence, read N- to C-terminus: Large ribosomal subunit protein bL20 (115 aa).

The protein belongs to the bacterial ribosomal protein bL20 family.

In terms of biological role, binds directly to 23S ribosomal RNA and is necessary for the in vitro assembly process of the 50S ribosomal subunit. It is not involved in the protein synthesizing functions of that subunit. The polypeptide is Large ribosomal subunit protein bL20 (Methylococcus capsulatus (strain ATCC 33009 / NCIMB 11132 / Bath)).